We begin with the raw amino-acid sequence, 211 residues long: MADS-box protein AGL72 (211 aa).

The 61-residue stretch at 1–61 folds into the MADS-box domain; that stretch reads MVRGKIEIKK…GRLYEFASSD (61 aa). One can recognise a K-box domain in the interval 88–187; that stretch reads VQGLKKEMVT…LCQVGERPMG (100 aa).

The protein resides in the nucleus. In terms of biological role, MADS-box transcription factor that acts with AGL42 and AGL71 in the control of flowering time. Promotes flowering at the shoot apical and axillary meristems. Seems to act through a gibberellin-dependent pathway. Interacts genetically with SOC1 and its expression is directly regulated by SOC1. The chain is MADS-box protein AGL72 (AGL72) from Arabidopsis thaliana (Mouse-ear cress).